Here is a 394-residue protein sequence, read N- to C-terminus: Chaperone protein DnaJ (394 aa).

Residues 5–75 (DYYEVLGVDK…EKKQQYDQFG (71 aa)) form the J domain. The segment at 150–231 (GVEKTIKYKR…CRGTGTAKET (82 aa)) adopts a CR-type zinc-finger fold. Zn(2+) contacts are provided by Cys-163, Cys-166, Cys-179, Cys-182, Cys-205, Cys-208, Cys-219, and Cys-222. CXXCXGXG motif repeat units lie at residues 163–170 (CEHCHGTG), 179–186 (CPTCNGQG), 205–212 (CPDCHGTG), and 219–226 (CKHCRGTG).

It belongs to the DnaJ family. Homodimer. Requires Zn(2+) as cofactor.

It is found in the cytoplasm. Functionally, participates actively in the response to hyperosmotic and heat shock by preventing the aggregation of stress-denatured proteins and by disaggregating proteins, also in an autonomous, DnaK-independent fashion. Unfolded proteins bind initially to DnaJ; upon interaction with the DnaJ-bound protein, DnaK hydrolyzes its bound ATP, resulting in the formation of a stable complex. GrpE releases ADP from DnaK; ATP binding to DnaK triggers the release of the substrate protein, thus completing the reaction cycle. Several rounds of ATP-dependent interactions between DnaJ, DnaK and GrpE are required for fully efficient folding. Also involved, together with DnaK and GrpE, in the DNA replication of plasmids through activation of initiation proteins. This chain is Chaperone protein DnaJ, found in Fusobacterium nucleatum subsp. polymorphum (Fusobacterium polymorphum).